The following is a 194-amino-acid chain: Outer surface 22 kDa lipoprotein (194 aa).

The signal sequence occupies residues 1–21 (MYKNGFFKNYLSLLLIFLVIA). The N-palmitoyl cysteine moiety is linked to residue cysteine 22. Residue cysteine 22 is the site of S-diacylglycerol cysteine attachment.

It localises to the cell outer membrane. This chain is Outer surface 22 kDa lipoprotein (p22), found in Borreliella burgdorferi (strain N40) (Borrelia burgdorferi).